A 120-amino-acid chain; its full sequence is Large ribosomal subunit protein uL18 (120 aa).

This sequence belongs to the universal ribosomal protein uL18 family. Part of the 50S ribosomal subunit; part of the 5S rRNA/L5/L18/L25 subcomplex. Contacts the 5S and 23S rRNAs.

Its function is as follows. This is one of the proteins that bind and probably mediate the attachment of the 5S RNA into the large ribosomal subunit, where it forms part of the central protuberance. In Xanthobacter autotrophicus (strain ATCC BAA-1158 / Py2), this protein is Large ribosomal subunit protein uL18.